The following is a 67-amino-acid chain: Prokaryotic ubiquitin-like protein Pup (67 aa).

Positions 1–36 are enriched in low complexity; the sequence is MPQQFEQPQAQQAVTQEDDALATTQAATQTESTDQA. The interval 1-38 is disordered; the sequence is MPQQFEQPQAQQAVTQEDDALATTQAATQTESTDQADV. An ARC ATPase binding region spans residues 23–61; it reads TTQAATQTESTDQADVLDDILDDIESTLETNAEEYVNSF. An Isoglutamyl lysine isopeptide (Glu-Lys) (interchain with K-? in acceptor proteins) cross-link involves residue Glu67.

It belongs to the prokaryotic ubiquitin-like protein family. Strongly interacts with the proteasome-associated ATPase ARC through a hydrophobic interface; the interacting region of Pup lies in its C-terminal half. There is one Pup binding site per ARC hexamer ring.

Its pathway is protein degradation; proteasomal Pup-dependent pathway. In terms of biological role, protein modifier that is covalently attached to lysine residues of substrate proteins, thereby targeting them for proteasomal degradation. The tagging system is termed pupylation. The chain is Prokaryotic ubiquitin-like protein Pup from Bifidobacterium longum subsp. infantis (strain ATCC 15697 / DSM 20088 / JCM 1222 / NCTC 11817 / S12).